A 934-amino-acid polypeptide reads, in one-letter code: Replication factor C subunit 1 (934 aa).

The segment at 1–190 (MSNSDIRSFF…RSSKSKGLPR (190 aa)) is disordered. Serine 27 carries the post-translational modification Phosphoserine. The segment covering 29–39 (KPKRSLKKKRI) has biased composition (basic residues). Residues 89 to 104 (GVSTTPDEYFEQQSTR) are compositionally biased toward polar residues. Positions 118-128 (TTSKDVVHPVK) are enriched in basic and acidic residues. A compositionally biased stretch (low complexity) spans 165–186 (TSKSKSHTTTATTHTSRSSKSK). The BRCT domain maps to 236–326 (GNSDCLSGIS…PASGGTGAAA (91 aa)). Residues threonine 362, cysteine 374, 416–423 (GPPGIGKT), and asparagine 519 contribute to the ATP site. The segment covering 876 to 895 (AEDEMLEEASDSEAANEEDI) has biased composition (acidic residues). The interval 876 to 934 (AEDEMLEEASDSEAANEEDIDLSKDKFISVPKKPKKRTKAKAEASSSSSTSRRSRKKTA) is disordered.

The protein belongs to the activator 1 large subunit family. As to quaternary structure, heteropentamer of subunits rfc1, rfc2, rfc3, rfc4 and rfc5 that forms a complex (RFC) with PCNA in the presence of ATP. Interacts with cdc24.

The protein resides in the nucleus. It localises to the nucleolus. Its function is as follows. The elongation of primed DNA templates by DNA polymerase delta and epsilon requires the action of the accessory proteins PCNA and activator 1. Subunit 1 is essential for cell cycle progression. It may associate with components of the DNA replication machinery and serve to enhance the efficiency of DNA replication. The sequence is that of Replication factor C subunit 1 (rfc1) from Schizosaccharomyces pombe (strain 972 / ATCC 24843) (Fission yeast).